A 140-amino-acid chain; its full sequence is MATERTFSILKPDATRRNLTGAVNAVIEEAGLRIVGQRRIRMTKEQAEKFYEVHKERPFFGELVTFMTSGPVVVQVLEGENAVAKYREVMGATNPAQAAEGTIRKKFAESVGENTVHGSDSAENAKLEIAQFFKDSDIAA.

The ATP site is built by lysine 11, phenylalanine 59, arginine 87, threonine 93, arginine 104, and asparagine 114. The active-site Pros-phosphohistidine intermediate is histidine 117.

Belongs to the NDK family. Homotetramer. The cofactor is Mg(2+).

Its subcellular location is the cytoplasm. It carries out the reaction a 2'-deoxyribonucleoside 5'-diphosphate + ATP = a 2'-deoxyribonucleoside 5'-triphosphate + ADP. The enzyme catalyses a ribonucleoside 5'-diphosphate + ATP = a ribonucleoside 5'-triphosphate + ADP. In terms of biological role, major role in the synthesis of nucleoside triphosphates other than ATP. The ATP gamma phosphate is transferred to the NDP beta phosphate via a ping-pong mechanism, using a phosphorylated active-site intermediate. The polypeptide is Nucleoside diphosphate kinase (Methylobacterium radiotolerans (strain ATCC 27329 / DSM 1819 / JCM 2831 / NBRC 15690 / NCIMB 10815 / 0-1)).